We begin with the raw amino-acid sequence, 648 residues long: cAMP-dependent protein kinase catalytic subunit (648 aa).

Composition is skewed to low complexity over residues 1–20 (MSNS…TINN), 46–67 (SGNN…NSSG), 136–175 (QQQP…PQQQ), and 232–254 (NTPS…NPHT). 4 disordered regions span residues 1-25 (MSNS…KVNV), 40-86 (GGGG…TKMD), 121-175 (KVPS…PQQQ), and 219-290 (QQQQ…DTNP). Polar residues predominate over residues 255–290 (SGLSLQHAHSSYTPSNVLHSPTHFQSSLPTRLDTNP). The Protein kinase domain occupies 336–590 (FKQIRVIGTG…ALDVKNHRWF (255 aa)). Residues 342–350 (IGTGTFGKV) and lysine 365 each bind ATP. Aspartate 459 (proton acceptor) is an active-site residue. Threonine 490 carries the phosphothreonine modification. The AGC-kinase C-terminal domain occupies 591 to 648 (SDINWERLYQRRDNGPFIPKIQHQGDSSNFEMYDEEEMVEEPPSSNYVDPYAHLFKDF).

This sequence belongs to the protein kinase superfamily. AGC Ser/Thr protein kinase family. cAMP subfamily. In Dictyostelium the holoenzyme is a dimer composed of a regulatory (R) and a catalytic (C) subunit. In the presence of cAMP it dissociates into the active C subunit and an R monomer.

It carries out the reaction L-seryl-[protein] + ATP = O-phospho-L-seryl-[protein] + ADP + H(+). The catalysed reaction is L-threonyl-[protein] + ATP = O-phospho-L-threonyl-[protein] + ADP + H(+). Its function is as follows. Essential for differentiation and fruit morphogenesis. This Dictyostelium discoideum (Social amoeba) protein is cAMP-dependent protein kinase catalytic subunit (pkaC).